The sequence spans 376 residues: 23S rRNA (uracil(747)-C(5))-methyltransferase RlmC (376 aa).

Residues cysteine 3, cysteine 11, cysteine 14, and cysteine 87 each coordinate [4Fe-4S] cluster. S-adenosyl-L-methionine is bound by residues glutamine 212, phenylalanine 241, glutamate 262, and asparagine 307. Residue cysteine 334 is the Nucleophile of the active site.

It belongs to the class I-like SAM-binding methyltransferase superfamily. RNA M5U methyltransferase family. RlmC subfamily.

The catalysed reaction is uridine(747) in 23S rRNA + S-adenosyl-L-methionine = 5-methyluridine(747) in 23S rRNA + S-adenosyl-L-homocysteine + H(+). Functionally, catalyzes the formation of 5-methyl-uridine at position 747 (m5U747) in 23S rRNA. The sequence is that of 23S rRNA (uracil(747)-C(5))-methyltransferase RlmC from Salmonella newport (strain SL254).